Here is a 488-residue protein sequence, read N- to C-terminus: MLVLHPALYEIIVRARDWRLLDEVAKELGMQAESLMRYVEEGRAKGVLQVEKKVVEVYELTEEGRRRAAEGLPEYNFLKSATCDGGRCVVSLSHPEAGVALANLAKFGVRPRGGVVELDEETYRKILSAVEEKQRYLSALEGAPRDVLQEFARRRIVRRVERTLIYVKAAVPPESVRPAEVKTAITSADIATGRWRTYLLKPFDLGVEPPEYPAPVPHFFNEFLDYVREVMIGLGFEEVRGPVLEVEFWNFDALFQAQDHPAREVHDTFYIRWEGPIEAPPEHLLEAVGRVHEEKWRYKWSREKALNPVLRTQTTAVTIRALAERGDGEYKVFTIGRVFRPEKLDPKHSMEFHQLDGIVVGPGLTFKHLLGQLEQIAKALGMTRVRFRPAYFPFTSPSVEVYAEHPKLGWVEFGGAGIFRPEVTEPLGVRKSRVLAWGWGLDRIAMILLGIDDIRELFTKDPEKLREYYARWVKYRSATGSTGKSYTL.

Residues threonine 315, 354-356 (QLD), phenylalanine 394, and phenylalanine 419 each bind L-phenylalanine.

The protein belongs to the class-II aminoacyl-tRNA synthetase family. Phe-tRNA synthetase alpha subunit type 2 subfamily. In terms of assembly, tetramer of two alpha and two beta subunits. Mg(2+) is required as a cofactor.

It is found in the cytoplasm. The catalysed reaction is tRNA(Phe) + L-phenylalanine + ATP = L-phenylalanyl-tRNA(Phe) + AMP + diphosphate + H(+). The chain is Phenylalanine--tRNA ligase alpha subunit from Pyrobaculum arsenaticum (strain DSM 13514 / JCM 11321 / PZ6).